The primary structure comprises 493 residues: 5'-3' exonuclease PLD3 (493 aa).

At 1 to 37 (MSSKVEYKPIQPHEEAENHFLQHELHKVKARKYYRCA) the chain is on the cytoplasmic side. Residues 38–58 (LVVAIIITLVFCILASQLLLF) form a helical; Signal-anchor for type II membrane protein membrane-spanning segment. Residues 59 to 493 (PFLSITSQTT…LSSWKEKCIF (435 aa)) are Lumenal-facing. N-linked (GlcNAc...) asparagine glycosylation occurs at asparagine 99. The PLD phosphodiesterase 1 domain occupies 197-224 (TDGILHTKFWVVDNEHFYIGSANMDWRS). Catalysis depends on residues histidine 202, lysine 204, and aspartate 209. N-linked (GlcNAc...) asparagine glycosylation is found at asparagine 237, asparagine 259, asparagine 269, asparagine 285, and asparagine 388. In terms of domain architecture, PLD phosphodiesterase 2 spans 412-438 (YARVNHNKYMVTDRVAYIGTSNWSGDY). Catalysis depends on residues histidine 417, lysine 419, and aspartate 424. 3 N-linked (GlcNAc...) asparagine glycosylation sites follow: asparagine 433, asparagine 450, and asparagine 476.

This sequence belongs to the phospholipase D family. Post-translationally, N-glycosylated. Proteolytically processed to a soluble form that is stable within endosomes and lysosomes. During transport through the secretory pathway becomes proteolysed by cysteine proteases, thereby releasing a stable soluble lysosomal lumenal polypeptide, whereas the transmembrane-bound fragment is rapidly degraded. Its transport route to lysosomes involves ubiquitination and the ESCRT complex. In terms of processing, ubiquitinated. Ubiquitination mediates sorting into lysosomes.

It localises to the endoplasmic reticulum membrane. Its subcellular location is the lysosome lumen. It is found in the early endosome membrane. The protein resides in the late endosome membrane. The protein localises to the golgi apparatus membrane. It localises to the endosome membrane. It carries out the reaction Exonucleolytic cleavage in the 5'- to 3'-direction to yield nucleoside 3'-phosphates.. Its function is as follows. 5'-&gt;3' DNA exonuclease which digests single-stranded DNA (ssDNA). Regulates inflammatory cytokine responses via the degradation of nucleic acids, by reducing the concentration of ssDNA able to stimulate TLR9, a nucleotide-sensing receptor in collaboration with PLD4. May be important in myotube formation. Plays a role in lysosomal homeostasis. Involved in the regulation of endosomal protein sorting. This is 5'-3' exonuclease PLD3 (pld3) from Xenopus laevis (African clawed frog).